The sequence spans 363 residues: Cyanide hydratase (363 aa).

The 280-residue stretch at 6–285 (YKAACVTSEP…DGLLFVDIDL (280 aa)) folds into the CN hydrolase domain. Glutamate 46 serves as the catalytic Proton acceptor. The active site involves lysine 128. The active-site Nucleophile is the cysteine 163.

The protein belongs to the carbon-nitrogen hydrolase superfamily. Nitrilase family. As to quaternary structure, oligomer of dimers, forming left-handed helical fibers.

It carries out the reaction formamide = hydrogen cyanide + H2O. In terms of biological role, catalyzes the hydration of cyanide to formamide. Degradation of cyanide may be important for plant pathogenic fungi in infection of cyanogenic plants. This is Cyanide hydratase (CyhAB) from Alternaria brassicicola (Dark leaf spot agent).